Reading from the N-terminus, the 143-residue chain is Large ribosomal subunit protein uL11 (143 aa).

This sequence belongs to the universal ribosomal protein uL11 family. As to quaternary structure, part of the ribosomal stalk of the 50S ribosomal subunit. Interacts with L10 and the large rRNA to form the base of the stalk. L10 forms an elongated spine to which L12 dimers bind in a sequential fashion forming a multimeric L10(L12)X complex. One or more lysine residues are methylated.

Its function is as follows. Forms part of the ribosomal stalk which helps the ribosome interact with GTP-bound translation factors. The chain is Large ribosomal subunit protein uL11 from Novosphingobium aromaticivorans (strain ATCC 700278 / DSM 12444 / CCUG 56034 / CIP 105152 / NBRC 16084 / F199).